A 331-amino-acid chain; its full sequence is Coiled-coil domain-containing protein 92 (331 aa).

Coiled coils occupy residues 18 to 44 and 76 to 152; these read MAATNLENQLHSAQKNLLFLQREHAST and DGTS…EQRA. Over residues 171–184 the composition is skewed to low complexity; it reads SSSGTSDASPSGSP. The interval 171–212 is disordered; sequence SSSGTSDASPSGSPVLASYKPAPPKDKLPETPRRRMKKSLSA. Residues 193–203 are compositionally biased toward basic and acidic residues; that stretch reads PPKDKLPETPR. Position 209 is a phosphoserine (serine 209).

In terms of assembly, interacts with CEP164. (Microbial infection) Interacts with ebolavirus protein NP; this interaction sequesters NP in the cytoplasm. Post-translationally, phosphorylated at Ser-209 by TTBK2.

The protein resides in the cytoplasm. It is found in the cytoskeleton. Its subcellular location is the microtubule organizing center. The protein localises to the centrosome. It localises to the centriole. Its function is as follows. Interferon-stimulated protein that plays a role in innate immunity. Strongly inhibits ebolavirus transcription and replication. Forms a complex with viral RNA-bound nucleocapsid NP and thereby prevents the transport of NP to the cell surface. The sequence is that of Coiled-coil domain-containing protein 92 (CCDC92) from Homo sapiens (Human).